A 334-amino-acid polypeptide reads, in one-letter code: Probable GTP 3',8-cyclase (334 aa).

Residues 24–256 enclose the Radical SAM core domain; it reads PYGRKVTGLR…RKKYIIDGVE (233 aa). Arg33 is a binding site for GTP. [4Fe-4S] cluster contacts are provided by Cys40 and Cys44. Tyr46 contributes to the S-adenosyl-L-methionine binding site. Cys47 serves as a coordination point for [4Fe-4S] cluster. Residue Lys85 coordinates GTP. Gly89 is a binding site for S-adenosyl-L-methionine. Thr113 contacts GTP. Ser137 provides a ligand contact to S-adenosyl-L-methionine. Lys176 lines the GTP pocket. Residues Cys269 and Cys272 each contribute to the [4Fe-4S] cluster site. 274–276 is a GTP binding site; the sequence is RLR. Cys286 is a [4Fe-4S] cluster binding site.

The protein belongs to the radical SAM superfamily. MoaA family. [4Fe-4S] cluster is required as a cofactor.

It carries out the reaction GTP + AH2 + S-adenosyl-L-methionine = (8S)-3',8-cyclo-7,8-dihydroguanosine 5'-triphosphate + 5'-deoxyadenosine + L-methionine + A + H(+). Its pathway is cofactor biosynthesis; molybdopterin biosynthesis. In terms of biological role, catalyzes the cyclization of GTP to (8S)-3',8-cyclo-7,8-dihydroguanosine 5'-triphosphate. The protein is Probable GTP 3',8-cyclase of Methanosarcina acetivorans (strain ATCC 35395 / DSM 2834 / JCM 12185 / C2A).